The primary structure comprises 229 residues: Potassium/proton antiporter CemA (229 aa).

4 consecutive transmembrane segments (helical) span residues 7 to 27 (FNPL…SFSF), 107 to 127 (ILNF…YILG), 154 to 174 (ILLL…ELMI), and 189 to 209 (IISG…KYLI).

Belongs to the CemA family.

Its subcellular location is the plastid. The protein resides in the chloroplast inner membrane. It carries out the reaction K(+)(in) + H(+)(out) = K(+)(out) + H(+)(in). Its function is as follows. Contributes to K(+)/H(+) antiport activity by supporting proton efflux to control proton extrusion and homeostasis in chloroplasts in a light-dependent manner to modulate photosynthesis. Prevents excessive induction of non-photochemical quenching (NPQ) under continuous-light conditions. Indirectly promotes efficient inorganic carbon uptake into chloroplasts. The polypeptide is Potassium/proton antiporter CemA (Ranunculus macranthus (Large buttercup)).